The chain runs to 154 residues: Small heat shock protein C2 (154 aa).

Positions 43–154 (STEKNLIPRT…GKTRKIEVKG (112 aa)) constitute a sHSP domain.

It belongs to the small heat shock protein (HSP20) family.

The chain is Small heat shock protein C2 (hspC2) from Rickettsia felis (strain ATCC VR-1525 / URRWXCal2) (Rickettsia azadi).